A 401-amino-acid polypeptide reads, in one-letter code: Argininosuccinate synthase (401 aa).

ATP is bound at residue 9 to 17 (AYSGGLDTS). Tyr88 is an L-citrulline binding site. Gly118 contacts ATP. The L-aspartate site is built by Thr120, Asn124, and Asp125. Asn124 contributes to the L-citrulline binding site. L-citrulline-binding residues include Arg128, Ser177, Ser186, Glu262, and Tyr274.

Belongs to the argininosuccinate synthase family. Type 1 subfamily. Homotetramer.

The protein localises to the cytoplasm. The catalysed reaction is L-citrulline + L-aspartate + ATP = 2-(N(omega)-L-arginino)succinate + AMP + diphosphate + H(+). It participates in amino-acid biosynthesis; L-arginine biosynthesis; L-arginine from L-ornithine and carbamoyl phosphate: step 2/3. This Chlorobaculum parvum (strain DSM 263 / NCIMB 8327) (Chlorobium vibrioforme subsp. thiosulfatophilum) protein is Argininosuccinate synthase.